Consider the following 237-residue polypeptide: Class B acid phosphatase (237 aa).

The first 23 residues, 1 to 23, serve as a signal peptide directing secretion; the sequence is MRKTPLALSAVFLLLSLNQSAFA. Aspartate 69 (nucleophile) is an active-site residue. Residues aspartate 69 and aspartate 71 each contribute to the Mg(2+) site. Aspartate 71 functions as the Proton donor in the catalytic mechanism. Residues 137 to 138 and lysine 177 contribute to the substrate site; that span reads TG. Aspartate 192 is a binding site for Mg(2+).

This sequence belongs to the class B bacterial acid phosphatase family. In terms of assembly, homotetramer. Mg(2+) is required as a cofactor.

Its subcellular location is the periplasm. It catalyses the reaction a phosphate monoester + H2O = an alcohol + phosphate. Dephosphorylates several organic phosphate monoesters. Also has a phosphotransferase activity catalyzing the transfer of low-energy phosphate groups from organic phosphate monoesters to free hydroxyl groups of various organic compounds. The chain is Class B acid phosphatase from Rahnella sp. (strain Y9602).